Here is a 471-residue protein sequence, read N- to C-terminus: Glutamate--tRNA ligase (471 aa).

Residues 9–19 carry the 'HIGH' region motif; that stretch reads PSPTGYLHVGG. Cys98, Cys100, Cys125, and His127 together coordinate Zn(2+). The short motif at 237–241 is the 'KMSKS' region element; it reads KLSKR. ATP is bound at residue Lys240.

The protein belongs to the class-I aminoacyl-tRNA synthetase family. Glutamate--tRNA ligase type 1 subfamily. In terms of assembly, monomer. It depends on Zn(2+) as a cofactor.

It localises to the cytoplasm. The enzyme catalyses tRNA(Glu) + L-glutamate + ATP = L-glutamyl-tRNA(Glu) + AMP + diphosphate. In terms of biological role, catalyzes the attachment of glutamate to tRNA(Glu) in a two-step reaction: glutamate is first activated by ATP to form Glu-AMP and then transferred to the acceptor end of tRNA(Glu). The polypeptide is Glutamate--tRNA ligase (Shigella flexneri).